The sequence spans 616 residues: Chaperone protein HscA (616 aa).

This sequence belongs to the heat shock protein 70 family.

Chaperone involved in the maturation of iron-sulfur cluster-containing proteins. Has a low intrinsic ATPase activity which is markedly stimulated by HscB. Involved in the maturation of IscU. The protein is Chaperone protein HscA of Salmonella paratyphi B (strain ATCC BAA-1250 / SPB7).